We begin with the raw amino-acid sequence, 99 residues long: DNA-directed RNA polymerase subunit omega (99 aa).

Belongs to the RNA polymerase subunit omega family. As to quaternary structure, the RNAP catalytic core consists of 2 alpha, 1 beta, 1 beta' and 1 omega subunit. When a sigma factor is associated with the core the holoenzyme is formed, which can initiate transcription.

The catalysed reaction is RNA(n) + a ribonucleoside 5'-triphosphate = RNA(n+1) + diphosphate. In terms of biological role, promotes RNA polymerase assembly. Latches the N- and C-terminal regions of the beta' subunit thereby facilitating its interaction with the beta and alpha subunits. In Deinococcus radiodurans (strain ATCC 13939 / DSM 20539 / JCM 16871 / CCUG 27074 / LMG 4051 / NBRC 15346 / NCIMB 9279 / VKM B-1422 / R1), this protein is DNA-directed RNA polymerase subunit omega (rpoZ).